A 495-amino-acid chain; its full sequence is Surface E' protein (495 aa).

The helical transmembrane segment at 224–235 threads the bilayer; it reads GTLIGLVALIGV.

Its subcellular location is the cell membrane. The protein is Surface E' protein (cbbE') of Coxiella burnetii.